The following is a 329-amino-acid chain: MSMKQPVRVAVTGAAGNISYAMLFRIASGEMLGKDQPVILQLLEIAPALDALKGVVMELEDCAFPLLAGVVQTDDATVAFKDVDYALLVGSRPRGPGMERKDLLEANAAIFSAQGKALNDVASRDVKVLVVGNPANTNAVIAQRNAPDLDPRNFTAMTRLDHNRAMAQLAGKTDSTVNDVKKMIIWGNHSSTQYPDLTASTVNGKPALDLVDRAWYEGTYIPEVQQRGAAIIKARGASSAASAANAAIAHVRTWVMGTDENDWVSMGVYSNGEYGIAKGLIYSFPVTCANGDWSIVDGVDVSSDFSKEKMAATEQELSEERDAVAHLLP.

Position 13–19 (13–19) interacts with NAD(+); it reads GAAGNIS. Substrate is bound by residues R94 and R100. NAD(+)-binding positions include N107, Q114, and 131–133; that span reads VGN. N133 and R164 together coordinate substrate. H189 serves as the catalytic Proton acceptor.

This sequence belongs to the LDH/MDH superfamily. MDH type 2 family.

It catalyses the reaction (S)-malate + NAD(+) = oxaloacetate + NADH + H(+). In terms of biological role, catalyzes the reversible oxidation of malate to oxaloacetate. The sequence is that of Malate dehydrogenase from Psychrobacter cryohalolentis (strain ATCC BAA-1226 / DSM 17306 / VKM B-2378 / K5).